The sequence spans 122 residues: Large ribosomal subunit protein uL14 (122 aa).

It belongs to the universal ribosomal protein uL14 family. Part of the 50S ribosomal subunit. Forms a cluster with proteins L3 and L19. In the 70S ribosome, L14 and L19 interact and together make contacts with the 16S rRNA in bridges B5 and B8.

Functionally, binds to 23S rRNA. Forms part of two intersubunit bridges in the 70S ribosome. The chain is Large ribosomal subunit protein uL14 from Finegoldia magna (strain ATCC 29328 / DSM 20472 / WAL 2508) (Peptostreptococcus magnus).